We begin with the raw amino-acid sequence, 1284 residues long: ABC multidrug transporter atrC (1284 aa).

Residues 1 to 11 are compositionally biased toward basic and acidic residues; that stretch reads MKSTAESKETP. A disordered region spans residues 1-24; it reads MKSTAESKETPSQDESTTSVPCTE. 6 helical membrane-spanning segments follow: residues 55 to 75, 99 to 119, 178 to 198, 203 to 223, 282 to 302, and 320 to 340; these read AVAI…NLIF, AAEL…LSYT, IGLL…RLWC, TLIC…VAAV, LLGL…GLAF, and IFTV…LAPY. Residues 55-346 enclose the ABC transmembrane type-1 1 domain; it reads AVAILAACAS…LAPYSIEFSR (292 aa). The region spanning 381–626 is the ABC transporter 1 domain; the sequence is VELENVTFSY…DGVYAGLVKI (246 aa). Residues asparagine 385 and asparagine 401 are each glycosylated (N-linked (GlcNAc...) asparagine). 416–423 contacts ATP; it reads GQSGSGKS. N-linked (GlcNAc...) asparagine glycosylation is found at asparagine 488 and asparagine 632. Transmembrane regions (helical) follow at residues 705–725 and 745–765; these read LVVL…AILM and FYAS…LAVG. The region spanning 705–992 is the ABC transmembrane type-1 2 domain; that stretch reads LVVLLGCLGG…LFQWSTSITK (288 aa). Residue asparagine 800 is glycosylated (N-linked (GlcNAc...) asparagine). 4 helical membrane-spanning segments follow: residues 824-844, 846-866, 931-951, and 955-975; these read IALV…AIAF, WKLG…AGMV, MICF…GFWY, and LVSL…SVFF. Asparagine 995 is a glycosylation site (N-linked (GlcNAc...) asparagine). The ABC transporter 2 domain maps to 1027–1280; the sequence is IAMDNVRFSY…GGLYRRMCEA (254 aa). 1062-1069 contributes to the ATP binding site; that stretch reads GSSGCGKS. Residue asparagine 1122 is glycosylated (N-linked (GlcNAc...) asparagine).

Belongs to the ABC transporter superfamily. ABCB family. Multidrug resistance exporter (TC 3.A.1.201) subfamily.

It is found in the cell membrane. Functionally, pleiotropic ABC efflux transporter involved in the protection of the cells against a wide range of toxic compounds. The polypeptide is ABC multidrug transporter atrC (Emericella nidulans (Aspergillus nidulans)).